Reading from the N-terminus, the 791-residue chain is KN motif and ankyrin repeat domain-containing protein 3 (791 aa).

Disordered stretches follow at residues 1–37 (MAKF…SVET), 56–181 (RGPA…GPAQ), 254–312 (ATSD…ETRE), 401–425 (GCTE…GDEM), and 463–514 (YESS…GDCE). Polar residues predominate over residues 25–34 (SARSPSSPYS). Residues 105 to 125 (LSPGAFPGLSLPPLSPRSLSR) are compositionally biased toward low complexity. Basic and acidic residues predominate over residues 127 to 149 (PRVEHTLLETSRRLEQAQARERA). Phosphoserine occurs at positions 151, 159, 163, 166, 167, and 176. The segment covering 158–180 (RSPRGSGRSSPAPNPALASPGPA) has biased composition (low complexity). A coiled-coil region spans residues 180-229 (AQLQLVREQMAAALRRLRELEDQARALPELQEQVRALRAEKARLLAGRVQ). Basic and acidic residues-rich tracts occupy residues 254 to 280 (ATSD…RRSE) and 293 to 312 (PDGE…ETRE). A Phosphoserine modification is found at Ser279. Positions 401–410 (GCTEKTTQTE) are enriched in polar residues. A compositionally biased stretch (low complexity) spans 485–496 (SSSSGSDDSSGG). A compositionally biased stretch (basic and acidic residues) spans 505–514 (HNDKDAGDCE). ANK repeat units follow at residues 606–636 (NGNT…DVNH), 640–677 (AGYS…AKAS), 679–708 (TGQT…DVNV), 712–742 (DGAT…DLTI), and 746–775 (EGTS…SNHQ). Polar residues predominate over residues 772-783 (SNHQGQSSTGSP). Residues 772-791 (SNHQGQSSTGSPTAKECNDK) form a disordered region.

Its function is as follows. May be involved in the control of cytoskeleton formation by regulating actin polymerization. This chain is KN motif and ankyrin repeat domain-containing protein 3, found in Mus musculus (Mouse).